A 128-amino-acid chain; its full sequence is Probable 4-amino-4-deoxy-L-arabinose-phosphoundecaprenol flippase subunit ArnF (128 aa).

At 1 to 10 (MKGYLWGGAS) the chain is on the cytoplasmic side. The chain crosses the membrane as a helical span at residues 11–31 (VVLVTVAQLVLKWGMMNIPLL). The Periplasmic segment spans residues 32–47 (SLADINVQFLTMYFVQ). The chain crosses the membrane as a helical span at residues 48-68 (LASVMCGLMGYALSMLCWFFA). Residues 69 to 77 (LRYLPLNRA) lie on the Cytoplasmic side of the membrane. Residues 78 to 98 (YPLLSLSYALVYLGAVLLPWF) traverse the membrane as a helical segment. The Periplasmic segment spans residues 99–101 (NEP). A helical membrane pass occupies residues 102–122 (ATLLKTLGAGFILLGIWLINI). Topologically, residues 123 to 128 (KPIKAS) are cytoplasmic.

The protein belongs to the ArnF family. Heterodimer of ArnE and ArnF.

The protein resides in the cell inner membrane. It participates in bacterial outer membrane biogenesis; lipopolysaccharide biosynthesis. Translocates 4-amino-4-deoxy-L-arabinose-phosphoundecaprenol (alpha-L-Ara4N-phosphoundecaprenol) from the cytoplasmic to the periplasmic side of the inner membrane. The protein is Probable 4-amino-4-deoxy-L-arabinose-phosphoundecaprenol flippase subunit ArnF of Yersinia pseudotuberculosis serotype O:1b (strain IP 31758).